The chain runs to 100 residues: Urease subunit gamma (100 aa).

Belongs to the urease gamma subunit family. As to quaternary structure, heterotrimer of UreA (gamma), UreB (beta) and UreC (alpha) subunits. Three heterotrimers associate to form the active enzyme.

Its subcellular location is the cytoplasm. The enzyme catalyses urea + 2 H2O + H(+) = hydrogencarbonate + 2 NH4(+). The protein operates within nitrogen metabolism; urea degradation; CO(2) and NH(3) from urea (urease route): step 1/1. The chain is Urease subunit gamma from Rhodopseudomonas palustris (strain ATCC BAA-98 / CGA009).